The primary structure comprises 867 residues: Ataxin-7 (867 aa).

Positions 1 to 15 are enriched in basic and acidic residues; that stretch reads MSERAADDVRGEPRR. Residues 1 to 59 are disordered; the sequence is MSERAADDVRGEPRRAAGGAAAARQQQQQPQPLQPQRQHPPLRRPRAEDGGTGDTTTSA. Low complexity predominate over residues 16–39; that stretch reads AAGGAAAARQQQQQPQPLQPQRQH. Position 222 is an N6-acetyllysine (lysine 222). Lysine 243 participates in a covalent cross-link: Glycyl lysine isopeptide (Lys-Gly) (interchain with G-Cter in SUMO); alternate. Residue lysine 243 forms a Glycyl lysine isopeptide (Lys-Gly) (interchain with G-Cter in SUMO2); alternate linkage. The 68-residue stretch at 320–387 folds into the SCA7 domain; the sequence is KRLSEREFDP…KAREKELIRH (68 aa). Residues 379 to 400 show a composition bias toward basic and acidic residues; that stretch reads AREKELIRHDSQQVPHPLRDPH. Disordered regions lie at residues 379–483, 600–711, and 845–867; these read AREK…EESV, HGTT…SHSV, and TGNISGAQGLTNNSLLHQPKARP. Pro residues-rich tracts occupy residues 426-437 and 447-462; these read PQTPSLPRPPGC and IDPPPGQESPHPPLPA. A compositionally biased stretch (acidic residues) spans 472-481; sequence EEGEGDDREE. The span at 619 to 647 shows a compositional bias: low complexity; it reads SVQSRQVSASSSPPSTPSGLSSVPSSPLS. Positions 649 to 659 are enriched in basic residues; it reads KPQKWKPSKSI. Over residues 665 to 674 the composition is skewed to polar residues; that stretch reads SALSTNCHNA. The segment covering 689–711 has biased composition (low complexity); it reads SSPLLVPSSSSSSSSSSSSSHSV. The segment covering 846-860 has biased composition (polar residues); sequence GNISGAQGLTNNSLL.

This sequence belongs to the ataxin-7 family. As to quaternary structure, component of the SAGA transcription coactivator-HAT complex, at least composed of SUPT3H, GCN5L2, TAF5L, TAF6L, SUPT7L, TADA3L, TAD1L, TAF10, TAF12, TRRAP, TAF9 and ATXN7. The STAGA core complex is associated with a subcomplex required for histone deubiquitination composed of ATXN7L3, ENY2 and USP22. Interacts with SORBS1, PSMC1 and CRX. Interacts with TRRAP, GCN5L2 and TAF10. Interacts with alpha tubulin. Post-translationally, proteolytically cleaved by caspase-7 (CASP7). In terms of processing, sumoylation has no effect on subcellular location or interaction with components of the STAGA complex. Widely expressed in adult tissues, with the highest expression in heart, brain, liver and kidney.

It localises to the nucleus. The protein localises to the nucleolus. Its subcellular location is the nucleus matrix. It is found in the cytoplasm. The protein resides in the cytoskeleton. In terms of biological role, acts as a component of the SAGA (aka STAGA) transcription coactivator-HAT complex. Mediates the interaction of SAGA complex with the CRX and is involved in CRX-dependent gene activation. Probably involved in tethering the deubiquitination module within the SAGA complex. Necessary for microtubule cytoskeleton stabilization. Involved in neurodegeneration. The protein is Ataxin-7 (Atxn7) of Mus musculus (Mouse).